The primary structure comprises 820 residues: Probable ATP-dependent RNA helicase DDX23 (820 aa).

Over residues 1–42 (MAGELADKKDRDASPSKEERKRSRTPDRERDRDRDRKSSPSK) the composition is skewed to basic and acidic residues. The tract at residues 1–244 (MAGELADKKD…QKIREEKDKS (244 aa)) is disordered. Phosphoserine occurs at positions 14 and 16. Positions 43–65 (DRKRHRSRDRRRGGSRSRSRSRS) are enriched in basic residues. Over residues 66–105 (KSAERERRHKERERDKERDRNKKDRDRDKDGHRRDKDRKR) the composition is skewed to basic and acidic residues. Phosphoserine is present on residues S107 and S109. Composition is skewed to basic and acidic residues over residues 112 to 137 (RGKD…DKKP), 147 to 226 (LLAK…RETN), and 233 to 244 (GRQKIREEKDKS). A Q motif motif is present at residues 391–419 (RSWKDSSLPPHILEVIDKCGYKEPTPIQR). A Helicase ATP-binding domain is found at 422–627 (IPIGLQNRDI…RSYLRRPAVV (206 aa)). 435-442 (AETGSGKT) lines the ATP pocket. The DEAD box motif lies at 549–552 (DEAD). One can recognise a Helicase C-terminal domain in the interval 651–799 (KRKKLLAILE…SCPPELANHP (149 aa)). Residues K686 and K811 each participate in a glycyl lysine isopeptide (Lys-Gly) (interchain with G-Cter in SUMO2) cross-link.

Belongs to the DEAD box helicase family. DDX23/PRP28 subfamily. The phosphorylated form (by SRPK2) is a component of the U4/U6-U5 tri-snRNP complex composed of the U4, U6 and U5 snRNAs and at least PRPF3, PRPF4, PRPF6, PRPF8, PRPF31, SNRNP200, TXNL4A, WDR57, SNRNP40, DDX23, CD2BP2, PPIH, SNU13, EFTUD2, SART1 and USP39. Identified in the spliceosome C complex. Interacts with ERBB4. Interacts with ERCC6. In vitro phosphorylated by CLK1 and U1 snRNP-associated protein kinase. Phosphorylated by SRPK2 and this phosphorylation is required for its association with the tri-snRNP (U4/U6-U5 tri-small nuclear ribonucleoproteins) and subsequent spliceosomal B complex formation. May be phosphorylated by SRPK2 on Ser residues in the SR domain; the phosphorylation is required for the removal of inappropriate R-loops during transcription.

Its subcellular location is the nucleus. It localises to the chromosome. The enzyme catalyses ATP + H2O = ADP + phosphate + H(+). Functionally, involved in pre-mRNA splicing and its phosphorylated form (by SRPK2) is required for spliceosomal B complex formation. Independently of its spliceosome formation function, required for the suppression of incorrect R-loops formed during transcription; R-loops are composed of a DNA:RNA hybrid and the associated non-template single-stranded DNA. The sequence is that of Probable ATP-dependent RNA helicase DDX23 from Pongo abelii (Sumatran orangutan).